A 403-amino-acid chain; its full sequence is Dynactin subunit 2-A (403 aa).

The segment at 1-26 (MADPKYADLPGIARNEPDVYETSDLP) is disordered. A coiled-coil region spans residues 99-132 (PQQKYQRLLHEVQELTQEVEKTQSTVKESAAEEK). Residues 183–203 (AAKTRKNPEGKSPAKGPGPDT) form a disordered region. The stretch at 381–401 (KENLATVEDNFSNIDGRIKKL) forms a coiled coil.

It belongs to the dynactin subunit 2 family. In terms of assembly, subunit of dynactin, a multiprotein complex part of a tripartite complex with dynein and a adapter, such as BICDL1, BICD2 or HOOK3. The dynactin complex is built around ACTR1A/ACTB filament and consists of an actin-related filament composed of a shoulder domain, a pointed end and a barbed end. Its length is defined by its flexible shoulder domain. The soulder is composed of 2 DCTN1 subunits, 4 DCTN2 and 2 DCTN3.

The protein localises to the cytoplasm. It is found in the cytoskeleton. Its subcellular location is the microtubule organizing center. The protein resides in the centrosome. It localises to the membrane. Its function is as follows. Part of the dynactin complex that activates the molecular motor dynein for ultra-processive transport along microtubules. In the dynactin soulder domain, binds the ACTR1A filament and acts as a molecular ruler to determine the length. Modulates cytoplasmic dynein binding to an organelle, and plays a role in prometaphase chromosome alignment and spindle organization during mitosis. Involved in anchoring microtubules to centrosomes. The sequence is that of Dynactin subunit 2-A (dctn2-a) from Xenopus laevis (African clawed frog).